The sequence spans 319 residues: L-galactose dehydrogenase (319 aa).

Tyrosine 59 acts as the Proton donor in catalysis. The SIS domain maps to 122–269; it reads HCHDIEFGSL…ANKEISSVLV (148 aa). Histidine 124 provides a ligand contact to substrate.

It belongs to the aldo/keto reductase family.

It catalyses the reaction L-galactose + NAD(+) = L-galactono-1,4-lactone + NADH + H(+). Its function is as follows. Catalyzes the oxidation of L-galactose to L-galactono-1,4-lactone in the presence of NAD(+). Uses NAD(+) as a hydrogen acceptor much more efficiently than NADP(+). The chain is L-galactose dehydrogenase (LGALDH) from Arabidopsis thaliana (Mouse-ear cress).